Here is a 376-residue protein sequence, read N- to C-terminus: Formate dehydrogenase 1 (376 aa).

Val97 and Asn121 together coordinate substrate. NAD(+) is bound by residues 176–177, Asp197, 244–248, Thr270, Asp296, and 325–328; these read RI, PLHKD, and HISG.

Belongs to the D-isomer specific 2-hydroxyacid dehydrogenase family. FDH subfamily. In terms of assembly, homodimer.

It localises to the cytoplasm. The catalysed reaction is formate + NAD(+) = CO2 + NADH. Its function is as follows. Catalyzes the NAD(+)-dependent oxidation of formate to carbon dioxide. Formate oxidation is the final step in the methanol oxidation pathway in methylotrophic microorganisms. Has a role in the detoxification of exogenous formate in non-methylotrophic organisms. The protein is Formate dehydrogenase 1 (FDH1) of Saccharomyces cerevisiae (strain YJM789) (Baker's yeast).